We begin with the raw amino-acid sequence, 134 residues long: MPDPQDRPDSEPSDASTPPAKKLPAKKAAKKAPARKTPAKKAPAKKTPAKGAKSAPPKPAEAPVSLQQRIETNGQLAAAAKDAAAQAKSTVEGANDALARNASVPAPSHSPVPLIVAVTLSLLALLLIRQLRRR.

Residues M1–S10 are compositionally biased toward basic and acidic residues. Positions M1–Q68 are disordered. Residues L23–P48 show a composition bias toward basic residues. A helical transmembrane segment spans residues P111–I128.

In terms of assembly, homodimer in solution. Is probably able to self-associate in higher oligomers along the DNA molecules. Interacts with the N-terminal region of Wag31.

It localises to the cell inner membrane. Its activity is regulated as follows. Can interact directly in vitro with the compound agrimophol, a phloroglucinol from the A.pilosa plant, whose extracts have been used in traditional Chinese medicine to treat pulmonary infections. Interaction with agrimophol leads to disruption of Rv3852's DNA binding function. Functionally, binds DNA in vitro. It has been proposed that Rv3852 plays a role in nucleoid organization and may function as an anchorage to tether the DNA to the membrane. However, it was later shown that it has no influence on nucleoid shape or compaction. It plays no role in virulence and only a minor role in the control of transcription, and does not appear to function as a typical nucleoid-associated protein. Its function is as follows. Interacts with Wag31, an important cell shape and cell wall integrity determinant, and facilitates the localization of Wag31 to the cell poles and the cell wall, thus enabling nascent peptidoglycan synthesis. The sequence is that of Histone-like protein Rv3852 from Mycobacterium tuberculosis (strain ATCC 25618 / H37Rv).